We begin with the raw amino-acid sequence, 272 residues long: PILR alpha-associated neural protein (272 aa).

The signal sequence occupies residues 1-27 (MWPAQLLSQLLPLWPLLLLPLSLPAQG). The interval 25 to 93 (AQGSSHRSPP…PSGFEEGPPS (69 aa)) is disordered. The Extracellular segment spans residues 28–174 (SSHRSPPAPA…FGGRGEGVDP (147 aa)). O-linked (GalNAc...) threonine glycosylation is present at T136. The helical transmembrane segment at 175 to 195 (QLYVTITISIIIVLVATGIIF) threads the bilayer. Over 196-272 (KFCWDRSQKR…KGAPAFQLNR (77 aa)) the chain is Cytoplasmic. The disordered stretch occupies residues 205-272 (RRRPSGQQGA…KGAPAFQLNR (68 aa)). Residues 209 to 225 (SGQQGALRQEESQQPLT) show a composition bias toward polar residues.

O-glycosylation at Thr-136 is essential for recognition by PILRA.

It is found in the membrane. Acts as a ligand for PILRA in neuronal tissues, where it may be involved in immune regulation. This chain is PILR alpha-associated neural protein (Pianp), found in Rattus norvegicus (Rat).